The sequence spans 201 residues: UPF0301 protein Arad_1256 (201 aa).

The protein belongs to the UPF0301 (AlgH) family.

The polypeptide is UPF0301 protein Arad_1256 (Rhizobium rhizogenes (strain K84 / ATCC BAA-868) (Agrobacterium radiobacter)).